We begin with the raw amino-acid sequence, 538 residues long: Putative cysteine ligase BshC (538 aa).

A coiled-coil region spans residues 454-482 (LEKNAGFIQDQLQFLEKTVIRRIEEKENY).

It belongs to the BshC family.

Involved in bacillithiol (BSH) biosynthesis. May catalyze the last step of the pathway, the addition of cysteine to glucosamine malate (GlcN-Mal) to generate BSH. This Bacillus licheniformis (strain ATCC 14580 / DSM 13 / JCM 2505 / CCUG 7422 / NBRC 12200 / NCIMB 9375 / NCTC 10341 / NRRL NRS-1264 / Gibson 46) protein is Putative cysteine ligase BshC.